We begin with the raw amino-acid sequence, 483 residues long: Aspartyl/glutamyl-tRNA(Asn/Gln) amidotransferase subunit B (483 aa).

This sequence belongs to the GatB/GatE family. GatB subfamily. As to quaternary structure, heterotrimer of A, B and C subunits.

It carries out the reaction L-glutamyl-tRNA(Gln) + L-glutamine + ATP + H2O = L-glutaminyl-tRNA(Gln) + L-glutamate + ADP + phosphate + H(+). The catalysed reaction is L-aspartyl-tRNA(Asn) + L-glutamine + ATP + H2O = L-asparaginyl-tRNA(Asn) + L-glutamate + ADP + phosphate + 2 H(+). In terms of biological role, allows the formation of correctly charged Asn-tRNA(Asn) or Gln-tRNA(Gln) through the transamidation of misacylated Asp-tRNA(Asn) or Glu-tRNA(Gln) in organisms which lack either or both of asparaginyl-tRNA or glutaminyl-tRNA synthetases. The reaction takes place in the presence of glutamine and ATP through an activated phospho-Asp-tRNA(Asn) or phospho-Glu-tRNA(Gln). This chain is Aspartyl/glutamyl-tRNA(Asn/Gln) amidotransferase subunit B, found in Rickettsia rickettsii (strain Iowa).